Here is a 345-residue protein sequence, read N- to C-terminus: MTTGHGVGPADAAGGPARHLPVMLAEVLAHLAPKDAGRYVDGTFGAGGYTRGILNAADCRVLAIDRDPTAIAAGADLVAEAAGRLTLVNDRFSRLDAVAQEHDFSPLDGVVLDIGVSSMQLDQAERGFSFRRDGPLDMRMGDTGPSAADLVATLDEVQLAHLIWSLGEERHSRPIARAIVKARDESPITRTAQLAEIVSRIVWQKPGEMHPATRTFQALRIAVNEELSELVQALVAAERALAPGGRLVVVTFHSLEDRIVKTFLSNRAKAPSASRHLPQAEGPEPAFRLVAKGVVEPGPDEVAGNPRARSAKLRAAERTNAPAHPGGDLMGLLPAPPPQRHGRRR.

S-adenosyl-L-methionine contacts are provided by residues 47-49, D65, F92, D113, and Q120; that span reads GGY. A disordered region spans residues 296–345; the sequence is EPGPDEVAGNPRARSAKLRAAERTNAPAHPGGDLMGLLPAPPPQRHGRRR.

It belongs to the methyltransferase superfamily. RsmH family.

Its subcellular location is the cytoplasm. It carries out the reaction cytidine(1402) in 16S rRNA + S-adenosyl-L-methionine = N(4)-methylcytidine(1402) in 16S rRNA + S-adenosyl-L-homocysteine + H(+). In terms of biological role, specifically methylates the N4 position of cytidine in position 1402 (C1402) of 16S rRNA. In Xanthobacter autotrophicus (strain ATCC BAA-1158 / Py2), this protein is Ribosomal RNA small subunit methyltransferase H.